Here is a 248-residue protein sequence, read N- to C-terminus: MQSLIKYQPKSPLKYLSSYFGDRKKNLFKLVLLGAPGAGKGTQAKHLVSKYSLKHISPGNLLREEMNRNSPITAQIKDYVSKGQLVPDSIVIKLIENHIATIGDSNWLLDGFPRSESQAAALRASPDLFPTHIVELKVDQEAVVQRLGGRRFDPITGNTYHIIYDPPPPDIADRVVVRTDDREDVIRERFRVYAENKDLVDKVFNHSVVSINCEGQTIDEVSLQLDRVLSMPSTIHPSIIMPERNKKQ.

ATP is bound at residue 37–42 (GAGKGT). The segment at 57–86 (SPGNLLREEMNRNSPITAQIKDYVSKGQLV) is NMP. Residues R63, 84-86 (QLV), 111-114 (GFPR), and Q118 contribute to the AMP site. An LID region spans residues 149–181 (GRRFDPITGNTYHIIYDPPPPDIADRVVVRTDD). ATP is bound at residue R150. AMP-binding residues include R178 and R189.

The protein belongs to the adenylate kinase family. As to quaternary structure, monomer.

It is found in the cytoplasm. It carries out the reaction AMP + ATP = 2 ADP. Catalyzes the reversible transfer of the terminal phosphate group between ATP and AMP. Plays an important role in cellular energy homeostasis and in adenine nucleotide metabolism. The polypeptide is Adenylate kinase (Giardia intestinalis (Giardia lamblia)).